The sequence spans 495 residues: Probable polyamine transporter At1g31830 (495 aa).

The next 11 membrane-spanning stretches (helical) occupy residues 49–69 (VSML…PFGV), 79–99 (LLAL…EALI), 112–132 (GYVV…QGWM), 156–176 (VPAL…TILL), 186–206 (IVGW…AVMG), 230–250 (LYLN…TLAG), 267–287 (VILV…AIPL), 357–377 (TPLL…WLSF), 380–400 (IVAA…IAFV), 417–437 (IGTT…CAVV), and 442–462 (LKVA…HPLL).

This sequence belongs to the amino acid-polyamine-organocation (APC) superfamily. Polyamine:cation symporter (PHS) (TC 2.A.3.12) family.

It localises to the cell membrane. Its function is as follows. Probable cell membrane polyamine/proton symporter involved in the polyamine uptake in cells. The polypeptide is Probable polyamine transporter At1g31830 (Arabidopsis thaliana (Mouse-ear cress)).